A 243-amino-acid chain; its full sequence is DNA repair protein RecO (243 aa).

The protein belongs to the RecO family.

In terms of biological role, involved in DNA repair and RecF pathway recombination. The polypeptide is DNA repair protein RecO (Thermobifida fusca (strain YX)).